Reading from the N-terminus, the 281-residue chain is NADPH-dependent 7-cyano-7-deazaguanine reductase (281 aa).

Residue 81 to 83 (IES) coordinates substrate. 83–84 (SK) provides a ligand contact to NADPH. The active-site Thioimide intermediate is the Cys-188. The Proton donor role is filled by Asp-195. 227–228 (HE) provides a ligand contact to substrate. 256–257 (RG) contributes to the NADPH binding site.

It belongs to the GTP cyclohydrolase I family. QueF type 2 subfamily. As to quaternary structure, homodimer.

The protein resides in the cytoplasm. The enzyme catalyses 7-aminomethyl-7-carbaguanine + 2 NADP(+) = 7-cyano-7-deazaguanine + 2 NADPH + 3 H(+). Its pathway is tRNA modification; tRNA-queuosine biosynthesis. Its function is as follows. Catalyzes the NADPH-dependent reduction of 7-cyano-7-deazaguanine (preQ0) to 7-aminomethyl-7-deazaguanine (preQ1). This is NADPH-dependent 7-cyano-7-deazaguanine reductase from Paracidovorax citrulli (strain AAC00-1) (Acidovorax citrulli).